We begin with the raw amino-acid sequence, 405 residues long: N-methyltransferase nanE (405 aa).

S-adenosyl-L-methionine is bound by residues 238–239 (GG), Asp261, and 290–291 (HH).

This sequence belongs to the class I-like SAM-binding methyltransferase superfamily. Cation-independent O-methyltransferase family.

It participates in secondary metabolite biosynthesis. In terms of biological role, N-methyltransferase; part of the gene cluster that mediates the biosynthesis of the benzazepine alkaloid nanangelenin A which contains an unprecedented 3,4-dihydro-1-benzazepine-2,5-dione-N-prenyl-N-acetoxy-anthranilamide scaffold. The first step of nanangelenin biosynthesis is catalyzed by the indoleamine 2,3-dioxygenase nanC which produces N-formyl-kynurenine through the catabolism of tryptophan. The two-module NRPS nanA then utilizes anthranilate (Ant) and L-kynurenine (L-Kyn) to assemble the dipeptide product nanangelenin B. The first adenylation domain of nanA (A1) loads anthranilate onto the T1 domain, while A2 loads kynurenine, generated through spontaneous nonenzymatic deformylation of the nanC-supplied N-formyl-kynurenine. The peptide bond formation between the tethered amino acids is catalyzed by the first condensation domain (C1) between anthranilate's carbonyl carbon and kynurenine's aliphatic primary amine. The second C domain (C2) catalyzes the final cyclization event between the aromatic amine of kynurenine and the tethered carbonyl carbon, yielding nanangelenin B. The terminal T3 domain enhances the catalytic efficiency of C2, suggesting the T2-tethered Ant-L-Kyn is transferred to T3 prior to cyclization by C2. Once released from nanA, nanangelenin B is then prenylated by the prenyltransferase nanD to form nanangelenin C. Nanangelenin C is then N-hydroxylated by the FAD-dependent monooxygenase nanF and further acetylated by the acetyltransferase nanB to yield nanangelenin F. Finally, the N-methyltransferase nanE methylates the amide nitrogen of 1-benzazepine to convert nanangelenin F into nanangelenin A. NanE is also able to methylate most of the intermediates of the pathway such as nanangelenin B and nanangelenin C to produce nanangelenin D and nanangelenin E, respectively. In Aspergillus nanangensis, this protein is N-methyltransferase nanE.